Consider the following 458-residue polypeptide: MRGPVKIVATVGPSSSSASILAQMLSLGVDVARINASHGGVEQWNSMLESLRRAEEAVGKRVGVAVDLEGPRVRTGNSEPVKLEKGDLVTLGFMEGDVPVDARQFFETIDEGDIVLLDDGKIILQVESVEGFRVKARVLEGGVLGPRKGVVVRGKEPDLPPLSAKDRRALEFFADKGVSHVYVSFARSAEHVEKVRTVVRRLGLRQARIFAKIEGPSGVSRIGEIAEASDGVIIARGDLGMHYSLEELPEIQELIVWEARKRYKTVVLATEFLSSMIEKPVPTRSEVVDIYQAVLQTADALMLTGETAIGKYPVKSVQWMAKISSRAYKKLATSPPERPRPTSTPYKLALGLVELAESLDSPLVVYSKTGRFAERLASFKPLKTFYVGVPSREVERVVRHLWGAEPIVVGDYPYEAGLAKTYEKLRRENIIHGDETVVEAAWSSERGIYIIRVRNLEF.

Arg-33 contacts substrate. Residues Asn-35, Ser-37, and Asp-67 each coordinate K(+). Residue 35-38 (NASH) participates in ATP binding. ATP is bound by residues Arg-74 and Lys-148. Residue Glu-214 coordinates Mg(2+). 3 residues coordinate substrate: Gly-237, Asp-238, and Thr-270. Position 238 (Asp-238) interacts with Mg(2+).

The protein belongs to the pyruvate kinase family. Homotetramer. A divalent metal cation serves as cofactor.

It catalyses the reaction pyruvate + ATP = phosphoenolpyruvate + ADP + H(+). Its pathway is carbohydrate degradation; glycolysis; pyruvate from D-glyceraldehyde 3-phosphate: step 5/5. Its activity is regulated as follows. Not activated by classical allosteric effectors. The protein is Pyruvate kinase (pyk) of Aeropyrum pernix (strain ATCC 700893 / DSM 11879 / JCM 9820 / NBRC 100138 / K1).